The following is a 516-amino-acid chain: D-aminopeptidase (516 aa).

Ser-61 (nucleophile) is an active-site residue. The Proton donor/acceptor role is filled by Lys-64. The tract at residues 476-486 (RRSMDAPAPGD) is important for specificity. Asp-480 contacts substrate.

This sequence belongs to the peptidase S12 family. As to quaternary structure, homodimer.

It catalyses the reaction Release of an N-terminal D-amino acid from a peptide, Xaa-|-Yaa-, in which Xaa is preferably D-Ala, D-Ser or D-Thr. D-amino acid amides and methyl esters also are hydrolyzed, as is glycine amide.. With respect to regulation, inhibited by beta-lactam compounds such as 6-aminopenicillic acid, 7-aminocephalosporanic acid, benzylpenicillin and ampicillin. Inhibited by p-chloromercuribenzoate. In terms of biological role, hydrolyzes N-terminal residues in D-amino acid-containing peptides. This is D-aminopeptidase from Cereibacter sphaeroides (strain ATCC 17023 / DSM 158 / JCM 6121 / CCUG 31486 / LMG 2827 / NBRC 12203 / NCIMB 8253 / ATH 2.4.1.) (Rhodobacter sphaeroides).